The following is a 503-amino-acid chain: ATP synthase subunit alpha (503 aa).

170 to 177 is a binding site for ATP; sequence GDKQTGKT.

The protein belongs to the ATPase alpha/beta chains family. As to quaternary structure, F-type ATPases have 2 components, CF(1) - the catalytic core - and CF(0) - the membrane proton channel. CF(1) has five subunits: alpha(3), beta(3), gamma(1), delta(1), epsilon(1). CF(0) has three main subunits: a(1), b(2) and c(9-12). The alpha and beta chains form an alternating ring which encloses part of the gamma chain. CF(1) is attached to CF(0) by a central stalk formed by the gamma and epsilon chains, while a peripheral stalk is formed by the delta and b chains.

The protein localises to the cell inner membrane. It catalyses the reaction ATP + H2O + 4 H(+)(in) = ADP + phosphate + 5 H(+)(out). In terms of biological role, produces ATP from ADP in the presence of a proton gradient across the membrane. The alpha chain is a regulatory subunit. The chain is ATP synthase subunit alpha from Helicobacter pylori (strain G27).